The chain runs to 302 residues: Syntaxin-17 (302 aa).

S2 carries the post-translational modification N-acetylserine. The Cytoplasmic segment spans residues 2–228; sequence SEDEEKVKLR…KNLGKAAKYK (227 aa). An N6-acetyllysine modification is found at K41. Residues 53–123 are a coiled coil; that stretch reads EEHINAGRTV…EELKKQFNDE (71 aa). Y157 is subject to Phosphotyrosine; by ABL1. Residues 162–224 enclose the t-SNARE coiled-coil homology domain; that stretch reads IPQDQNAAES…EEGTKNLGKA (63 aa). The chain crosses the membrane as a helical span at residues 229-249; that stretch reads LAALPVAGALIGGMVGGPIGL. Residues 229-275 form a necessary and sufficient for localization to autophagosome region; that stretch reads LAALPVAGALIGGMVGGPIGLLAGFKVAGIAAALGGGVLGFTGGKLI. Residues 250-254 are Lumenal-facing; that stretch reads LAGFK. A helical membrane pass occupies residues 255-275; sequence VAGIAAALGGGVLGFTGGKLI. At 276–302 the chain is on the cytoplasmic side; sequence QRKKQKMMEKLTSSCPDLPSQTDKKCS. Residue S289 is modified to Phosphoserine. Residues 299-302 carry the Endoplasmic reticulum retention signal motif; sequence KKCS.

This sequence belongs to the syntaxin family. As to quaternary structure, forms a SNARE complex composed of VAMP8, SNAP29 and STX17 involved in fusion of autophagosome with lysosome. Interacts with VAMP7 and VTI1B. Probably interacts with BET1, SCFD1 and SEC22B. Interacts with PTPN2 and ABL1; involved in STX17 phosphorylation. Interacts with COPB1. Interacts with TMED9 and TMED10; the interaction is direct. Interacts with ATG14. Interacts with RUBCNL/PACER; promoting targeting of RUBCNL/PACER to autophagosome. Interacts with VAMP8, SNAP29, VPS39 and VPS41; these interactions are increased in the absence of TMEM39A. Interacts with IRGM; promoting STX17 recruitment to autophagosomes. Interacts with ATG8 proteins GABARAP and MAP1LC3B. Interacts with RNF115; this interaction enhances STX17 stability which in turn promotes autophagosome maturation. Interacts with RAB39A (GTP-bound); the interaction promotes autophagosome-lysosome membrane fusion driven by STX17-SNAP29-VAMP8. Interacts with RAB39B; the interaction may promote a different fonction in autophagy as compared with RAB39A. In terms of assembly, (Microbial infection) The interactions with VAMP8, SNAP29 and VPS41 are decreased in presence of SARS coronavirus-2/SARS-CoV-2 ORF3A protein. In terms of processing, phosphorylated at Tyr-157 probably by ABL1. Dephosphorylation by PTPN2; regulates exit from the endoplasmic reticulum. (Microbial infection) Cleaved by the L.pneumophila serine protease Lpg1137, impairing endoplasmic reticulum-mitochondria communication, leading to inhibit autophagy.

The protein localises to the endoplasmic reticulum membrane. It localises to the smooth endoplasmic reticulum membrane. It is found in the endoplasmic reticulum-Golgi intermediate compartment membrane. Its subcellular location is the cytoplasmic vesicle. The protein resides in the autophagosome membrane. The protein localises to the COPII-coated vesicle membrane. It localises to the cytoplasm. It is found in the cytosol. Its subcellular location is the mitochondrion membrane. The protein resides in the autolysosome membrane. SNAREs, soluble N-ethylmaleimide-sensitive factor-attachment protein receptors, are essential proteins for fusion of cellular membranes. SNAREs localized on opposing membranes assemble to form a trans-SNARE complex, an extended, parallel four alpha-helical bundle that drives membrane fusion. STX17 is a SNARE of the autophagosome involved in autophagy through the direct control of autophagosome membrane fusion with the lysosome membrane. May also play a role in the early secretory pathway where it may maintain the architecture of the endoplasmic reticulum-Golgi intermediate compartment/ERGIC and Golgi and/or regulate transport between the endoplasmic reticulum, the ERGIC and the Golgi. The protein is Syntaxin-17 of Homo sapiens (Human).